The primary structure comprises 126 residues: Holo-[acyl-carrier-protein] synthase (126 aa).

Positions 9 and 58 each coordinate Mg(2+).

The protein belongs to the P-Pant transferase superfamily. AcpS family. Requires Mg(2+) as cofactor.

It is found in the cytoplasm. It carries out the reaction apo-[ACP] + CoA = holo-[ACP] + adenosine 3',5'-bisphosphate + H(+). In terms of biological role, transfers the 4'-phosphopantetheine moiety from coenzyme A to a Ser of acyl-carrier-protein. In Citrobacter koseri (strain ATCC BAA-895 / CDC 4225-83 / SGSC4696), this protein is Holo-[acyl-carrier-protein] synthase.